We begin with the raw amino-acid sequence, 173 residues long: NADH-ubiquinone oxidoreductase chain 6 (173 aa).

Transmembrane regions (helical) follow at residues 1-21 (MVYFMFIMLVGLILGLMAVAS), 25-45 (PYFAALGLVVAAGVGCGLLVG), 53-73 (LVLFLIYLGGMLVVFAYTAAL), 82-102 (WGDWSVLLYVSVYLLGIFFVG), and 141-161 (GIMLVLGGWVLLLTLFVILEL).

Belongs to the complex I subunit 6 family.

Its subcellular location is the mitochondrion membrane. It carries out the reaction a ubiquinone + NADH + 5 H(+)(in) = a ubiquinol + NAD(+) + 4 H(+)(out). In terms of biological role, core subunit of the mitochondrial membrane respiratory chain NADH dehydrogenase (Complex I) that is believed to belong to the minimal assembly required for catalysis. Complex I functions in the transfer of electrons from NADH to the respiratory chain. The immediate electron acceptor for the enzyme is believed to be ubiquinone. This Squalus acanthias (Spiny dogfish) protein is NADH-ubiquinone oxidoreductase chain 6 (MT-ND6).